The sequence spans 184 residues: MTDTPPENEEQHESNVQNENEVEHLQQEIVTLKTELKEKNDKYLMALAESENSRKRLQKERQELMQYALENTLIDFLNPIESMEKALGFATQMSDDVKNWALGFNMILNQFKQIFEEKGIIEYSSIGQKFNPFLHEAVQTEETSEVPEGTILEEFAKGYKIGERPIRVAKVKVAKAPTPKENKE.

Residues 1-10 (MTDTPPENEE) show a composition bias toward acidic residues. The segment at 1–22 (MTDTPPENEEQHESNVQNENEV) is disordered.

This sequence belongs to the GrpE family. As to quaternary structure, homodimer.

The protein localises to the cytoplasm. Its function is as follows. Participates actively in the response to hyperosmotic and heat shock by preventing the aggregation of stress-denatured proteins, in association with DnaK and GrpE. It is the nucleotide exchange factor for DnaK and may function as a thermosensor. Unfolded proteins bind initially to DnaJ; upon interaction with the DnaJ-bound protein, DnaK hydrolyzes its bound ATP, resulting in the formation of a stable complex. GrpE releases ADP from DnaK; ATP binding to DnaK triggers the release of the substrate protein, thus completing the reaction cycle. Several rounds of ATP-dependent interactions between DnaJ, DnaK and GrpE are required for fully efficient folding. The sequence is that of Protein GrpE from Chlamydia pneumoniae (Chlamydophila pneumoniae).